Consider the following 284-residue polypeptide: Tropomyosin beta chain (284 aa).

The residue at position 1 (Met-1) is an N-acetylmethionine. Residues 1 to 284 are a coiled coil; sequence MEAIKKKMQM…DNALNDITSL (284 aa). Basic and acidic residues-rich tracts occupy residues 22-40 and 51-66; these read AEQAEADKKQAEDRCKQLE and KGTEDEVEKYSESVKE. Residues 22-66 form a disordered region; that stretch reads AEQAEADKKQAEDRCKQLEEEQQGLQKKLKGTEDEVEKYSESVKE.

The protein belongs to the tropomyosin family. In terms of assembly, homodimer. Heterodimer of an alpha (TPM1, TPM3 or TPM4) and a beta (TPM2) chain.

It localises to the cytoplasm. It is found in the cytoskeleton. Its function is as follows. Binds to actin filaments in muscle and non-muscle cells. Plays a central role, in association with the troponin complex, in the calcium dependent regulation of vertebrate striated muscle contraction. Smooth muscle contraction is regulated by interaction with caldesmon. In non-muscle cells is implicated in stabilizing cytoskeleton actin filaments. The protein is Tropomyosin beta chain (TPM2) of Gallus gallus (Chicken).